A 424-amino-acid chain; its full sequence is 3-phosphoshikimate 1-carboxyvinyltransferase (424 aa).

3-phosphoshikimate is bound by residues Lys-21, Ser-22, and Arg-26. Position 21 (Lys-21) interacts with phosphoenolpyruvate. 2 residues coordinate phosphoenolpyruvate: Gly-92 and Arg-120. 6 residues coordinate 3-phosphoshikimate: Ser-163, Ser-164, Gln-165, Ser-191, Asp-306, and Lys-333. Position 165 (Gln-165) interacts with phosphoenolpyruvate. The active-site Proton acceptor is the Asp-306. Phosphoenolpyruvate contacts are provided by Arg-337, Arg-379, and Lys-405.

Belongs to the EPSP synthase family. In terms of assembly, monomer.

The protein resides in the cytoplasm. The catalysed reaction is 3-phosphoshikimate + phosphoenolpyruvate = 5-O-(1-carboxyvinyl)-3-phosphoshikimate + phosphate. Its pathway is metabolic intermediate biosynthesis; chorismate biosynthesis; chorismate from D-erythrose 4-phosphate and phosphoenolpyruvate: step 6/7. In terms of biological role, catalyzes the transfer of the enolpyruvyl moiety of phosphoenolpyruvate (PEP) to the 5-hydroxyl of shikimate-3-phosphate (S3P) to produce enolpyruvyl shikimate-3-phosphate and inorganic phosphate. This Clostridium perfringens (strain SM101 / Type A) protein is 3-phosphoshikimate 1-carboxyvinyltransferase.